The sequence spans 141 residues: Large ribosomal subunit protein uL11 (141 aa).

It belongs to the universal ribosomal protein uL11 family. In terms of assembly, part of the ribosomal stalk of the 50S ribosomal subunit. Interacts with L10 and the large rRNA to form the base of the stalk. L10 forms an elongated spine to which L12 dimers bind in a sequential fashion forming a multimeric L10(L12)X complex. One or more lysine residues are methylated.

Functionally, forms part of the ribosomal stalk which helps the ribosome interact with GTP-bound translation factors. This is Large ribosomal subunit protein uL11 from Prochlorococcus marinus (strain MIT 9515).